Here is a 123-residue protein sequence, read N- to C-terminus: Integration host factor subunit alpha (123 aa).

The interval 97–123 (NANGSAPSMSSSASAVDDDKSESASRT) is disordered. The span at 98 to 111 (ANGSAPSMSSSASA) shows a compositional bias: low complexity. Residues 113–123 (DDDKSESASRT) are compositionally biased toward basic and acidic residues.

Belongs to the bacterial histone-like protein family. As to quaternary structure, heterodimer of an alpha and a beta chain.

Functionally, this protein is one of the two subunits of integration host factor, a specific DNA-binding protein that functions in genetic recombination as well as in transcriptional and translational control. This Rhodopseudomonas palustris (strain BisB5) protein is Integration host factor subunit alpha.